The primary structure comprises 434 residues: MDYLDLGPYSSASGTVRLPGSKSISNRVLLLAALAEGDTTITNLLDSDDTRVMLDALGKLGVKLARDGDTCVVTGTRGAFTAKTADLFLGNAGTAVRPLTAALAINGGDYRVHGVPRMHERPIGDLVDGLRQIGAQIDYEQNEGFPPLRIRPATISVDAPIRVRGDVSSQFLTALLMTLPLVKAKDGRSIVEIDGELISKPYIDITIRLMARFGVNVEREGWQRFTVPAGVRYRSPGRIMVEGDASSASYFLAAGALGGGPLRVEGVGRASIQGDVGFAHALMQMGANVTMGDDWIEVRGIGHDHGKLEPIDMDFNLIPDAAMTIAVAALFANGTSTLRNIASWRVKETDRIAAMATELRKVGATVEEGADYLVVTPPAALTPNAAIDTYDDHRMAMCFSLVSLGGVPVRINDPKCVGKTFPDYFDRFAALAKA.

Lys-22, Ser-23, and Arg-27 together coordinate 3-phosphoshikimate. Lys-22 lines the phosphoenolpyruvate pocket. Positions 93 and 121 each coordinate phosphoenolpyruvate. 6 residues coordinate 3-phosphoshikimate: Ser-168, Ser-169, Gln-170, Ser-199, Asp-320, and Lys-347. Gln-170 serves as a coordination point for phosphoenolpyruvate. Residue Asp-320 is the Proton acceptor of the active site. Phosphoenolpyruvate is bound by residues Arg-351, Arg-394, and Lys-419.

It belongs to the EPSP synthase family. Monomer.

It is found in the cytoplasm. It carries out the reaction 3-phosphoshikimate + phosphoenolpyruvate = 5-O-(1-carboxyvinyl)-3-phosphoshikimate + phosphate. Its pathway is metabolic intermediate biosynthesis; chorismate biosynthesis; chorismate from D-erythrose 4-phosphate and phosphoenolpyruvate: step 6/7. In terms of biological role, catalyzes the transfer of the enolpyruvyl moiety of phosphoenolpyruvate (PEP) to the 5-hydroxyl of shikimate-3-phosphate (S3P) to produce enolpyruvyl shikimate-3-phosphate and inorganic phosphate. The chain is 3-phosphoshikimate 1-carboxyvinyltransferase from Burkholderia multivorans (strain ATCC 17616 / 249).